The primary structure comprises 156 residues: Cell division protein SepF (156 aa).

Over residues 23–36 (SYEKEQTDMKKQQD) the composition is skewed to basic and acidic residues. Positions 23–50 (SYEKEQTDMKKQQDPPEQQDVTFPKAQP) are disordered.

This sequence belongs to the SepF family. As to quaternary structure, homodimer. Interacts with FtsZ.

It is found in the cytoplasm. Its function is as follows. Cell division protein that is part of the divisome complex and is recruited early to the Z-ring. Probably stimulates Z-ring formation, perhaps through the cross-linking of FtsZ protofilaments. Its function overlaps with FtsA. The sequence is that of Cell division protein SepF from Bacillus thuringiensis (strain Al Hakam).